The sequence spans 134 residues: ATP synthase epsilon chain (134 aa).

Over residues 94–104 the composition is skewed to basic and acidic residues; that stretch reads AKLAKSRAESH. The disordered stretch occupies residues 94–115; the sequence is AKLAKSRAESHLEDDDDNTDIN.

The protein belongs to the ATPase epsilon chain family. As to quaternary structure, F-type ATPases have 2 components, CF(1) - the catalytic core - and CF(0) - the membrane proton channel. CF(1) has five subunits: alpha(3), beta(3), gamma(1), delta(1), epsilon(1). CF(0) has three main subunits: a, b and c.

The protein localises to the cell membrane. Functionally, produces ATP from ADP in the presence of a proton gradient across the membrane. The chain is ATP synthase epsilon chain from Staphylococcus epidermidis (strain ATCC 12228 / FDA PCI 1200).